The primary structure comprises 559 residues: 3-aminoavenalumate diazotase (559 aa).

Serine 181 is a binding site for Mg(2+). ATP-binding residues include alanine 227, glycine 332, and serine 336. Glutamate 337 provides a ligand contact to Mg(2+). ATP contacts are provided by aspartate 416 and arginine 437.

It belongs to the ATP-dependent AMP-binding enzyme family. Mg(2+) is required as a cofactor.

It carries out the reaction 3-aminoavenalumate + nitrite + ATP = 3-diazoavenalumate + AMP + diphosphate + H2O. The enzyme catalyses (E)-3-aminocoumarate + nitrite + ATP + H(+) = (E)-3-diazocoumarate + AMP + diphosphate + H2O. It catalyses the reaction 3-amino-4-hydroxybenzoate + nitrite + ATP + H(+) = 3-diazo-4-hydroxybenzoate + AMP + diphosphate + H2O. Ligase involved in the biosynthesis of avenalumic acid (AVA). Catalyzes the diazotization of 3-aminoavenalumic acid (3-AAA) to 3-diazoavenalumic acid (3-DAA). It can also act on 3-aminocoumaric acid (3-ACA) and 3-amino-4-hydroxybenzoic acid (3,4-AHBA) with lower activity. This is 3-aminoavenalumate diazotase from Streptomyces sp.